The following is a 281-amino-acid chain: MVSPIIDVKHLDYRYPQQATDQLTLHDISFTVMPGEWVAIVGHNGSGKSTLAKNLNGLLAPAAGTITVDGQVLSEETVWDIRRKIGMVFQNPDNQFVGATVADDVAFSLENQGVPRSEMLTRVQAALEQVNMQDFATREPARLSGGQKQRVALAGMIAARPQILILDEATSMLDPRGRQEVLTTIRDMKANSALTVLSITHDIDEAASANRVLVINDGEVKEEGTPAEIFQHGEALIKMGLDMPYAERLKAALKRQGVQVPAQYLTEKGMADWLWQLRSNK.

Residues 6 to 242 enclose the ABC transporter domain; that stretch reads IDVKHLDYRY…GEALIKMGLD (237 aa). Residue 42 to 49 participates in ATP binding; it reads GHNGSGKS.

Belongs to the ABC transporter superfamily. Energy-coupling factor EcfA family. Forms a stable energy-coupling factor (ECF) transporter complex composed of 2 membrane-embedded substrate-binding proteins (S component), 2 ATP-binding proteins (A component) and 2 transmembrane proteins (T component).

The protein resides in the cell membrane. In terms of biological role, ATP-binding (A) component of a common energy-coupling factor (ECF) ABC-transporter complex. Unlike classic ABC transporters this ECF transporter provides the energy necessary to transport a number of different substrates. The polypeptide is Energy-coupling factor transporter ATP-binding protein EcfA1 (Lactiplantibacillus plantarum (strain ATCC BAA-793 / NCIMB 8826 / WCFS1) (Lactobacillus plantarum)).